The primary structure comprises 235 residues: Exosome complex component RRP46 (235 aa).

The interval 1–21 (MEGAKRADANLLTDTGTESSP) is disordered. The span at 12 to 21 (LTDTGTESSP) shows a compositional bias: polar residues. 2 positions are modified to phosphoserine: serine 20 and serine 23.

Belongs to the RNase PH family. As to quaternary structure, homodimer. Component of the RNA exosome core complex (Exo-9), composed of EXOSC1, EXOSC2, EXOSC3, EXOSC4, EXOSC5, EXOSC6, EXOSC7, EXOSC8 and EXOSC9; within the complex interacts with EXOSC3, EXOSC8, and EXOSC9. The catalytically inactive RNA exosome core complex (Exo-9) associates with the catalytic subunit EXOSC10/RRP6. Exo-9 may associate with DIS3 to form the nucleolar exosome complex, or DIS3L to form the cytoplasmic exosome complex. Exo-9 is formed by a hexameric base ring consisting of the heterodimers EXOSC4-EXOSC9, EXOSC5-EXOSC8 and EXOSC6-EXOSC7, and a cap ring consisting of EXOSC1, EXOSC2 and EXOSC3. The RNA exosome complex associates with cofactors C1D/RRP47, MPHOSPH6/MPP6 and MTREX/MTR4. Interacts with GTPBP1. Interacts with ZC3HAV1. Interacts with DDX17 only in the presence of ZC3HAV1 in an RNA-independent manner.

It localises to the nucleus. Its subcellular location is the nucleolus. It is found in the cytoplasm. In terms of biological role, non-catalytic component of the RNA exosome complex which has 3'-&gt;5' exoribonuclease activity and participates in a multitude of cellular RNA processing and degradation events. In the nucleus, the RNA exosome complex is involved in proper maturation of stable RNA species such as rRNA, snRNA and snoRNA, in the elimination of RNA processing by-products and non-coding 'pervasive' transcripts, such as antisense RNA species and promoter-upstream transcripts (PROMPTs), and of mRNAs with processing defects, thereby limiting or excluding their export to the cytoplasm. The RNA exosome may be involved in Ig class switch recombination (CSR) and/or Ig variable region somatic hypermutation (SHM) by targeting AICDA deamination activity to transcribed dsDNA substrates. In the cytoplasm, the RNA exosome complex is involved in general mRNA turnover and specifically degrades inherently unstable mRNAs containing AU-rich elements (AREs) within their 3' untranslated regions, and in RNA surveillance pathways, preventing translation of aberrant mRNAs. It seems to be involved in degradation of histone mRNA. The catalytic inactive RNA exosome core complex of 9 subunits (Exo-9) is proposed to play a pivotal role in the binding and presentation of RNA for ribonucleolysis, and to serve as a scaffold for the association with catalytic subunits and accessory proteins or complexes. In vitro, EXOSC5 does not bind or digest single-stranded RNA and binds to double-stranded DNA without detectable DNase activity. This is Exosome complex component RRP46 (Exosc5) from Mus musculus (Mouse).